Reading from the N-terminus, the 359-residue chain is MPQELVYTLQQLADLLKVEVQGNTETPISGVEEISEAQSHHVTFLDNEKYSRFIKNTEAGAIILSKAQAQKYGHLNKNFLIVSEFPSIAFQKCIELFIPPIDSGFPGIHPTAVIHPTAHIGKDVFLEPYAVICQHAQIGDSSHIGAGSVIGAFSTLGEHCYVHPKVVIRERVVIGKRVIVQPGAIIGACGFGYITNAFGRHKHLKHLGQVIIEDDVEIGANTTIDRGRFKNSVIREGTKIDNQVQIAHHVEVGKHSMIVAQAGIAGSTKIGNHVIIGGQTGITGHISITDHVIMMAQTGVTKSISSPGIYGGAPARPYQEIHRQVAKIRGLPKLEERLGMLEEKVKGLSAQSEEAQITP.

The Proton acceptor role is filled by H248.

The protein belongs to the transferase hexapeptide repeat family. LpxD subfamily. As to quaternary structure, homotrimer.

It catalyses the reaction a UDP-3-O-[(3R)-3-hydroxyacyl]-alpha-D-glucosamine + a (3R)-hydroxyacyl-[ACP] = a UDP-2-N,3-O-bis[(3R)-3-hydroxyacyl]-alpha-D-glucosamine + holo-[ACP] + H(+). It participates in bacterial outer membrane biogenesis; LPS lipid A biosynthesis. Catalyzes the N-acylation of UDP-3-O-acylglucosamine using 3-hydroxyacyl-ACP as the acyl donor. Is involved in the biosynthesis of lipid A, a phosphorylated glycolipid that anchors the lipopolysaccharide to the outer membrane of the cell. The sequence is that of UDP-3-O-acylglucosamine N-acyltransferase from Chlamydia felis (strain Fe/C-56) (Chlamydophila felis).